The primary structure comprises 246 residues: 1-(5-phosphoribosyl)-5-[(5-phosphoribosylamino)methylideneamino] imidazole-4-carboxamide isomerase (246 aa).

Catalysis depends on Asp8, which acts as the Proton acceptor. Asp130 acts as the Proton donor in catalysis.

It belongs to the HisA/HisF family.

The protein localises to the cytoplasm. The enzyme catalyses 1-(5-phospho-beta-D-ribosyl)-5-[(5-phospho-beta-D-ribosylamino)methylideneamino]imidazole-4-carboxamide = 5-[(5-phospho-1-deoxy-D-ribulos-1-ylimino)methylamino]-1-(5-phospho-beta-D-ribosyl)imidazole-4-carboxamide. Its pathway is amino-acid biosynthesis; L-histidine biosynthesis; L-histidine from 5-phospho-alpha-D-ribose 1-diphosphate: step 4/9. The sequence is that of 1-(5-phosphoribosyl)-5-[(5-phosphoribosylamino)methylideneamino] imidazole-4-carboxamide isomerase from Alcanivorax borkumensis (strain ATCC 700651 / DSM 11573 / NCIMB 13689 / SK2).